Consider the following 415-residue polypeptide: Serine hydroxymethyltransferase (415 aa).

(6S)-5,6,7,8-tetrahydrofolate is bound by residues Leu-120 and 124 to 126 (GHL). The residue at position 229 (Lys-229) is an N6-(pyridoxal phosphate)lysine.

Belongs to the SHMT family. In terms of assembly, homodimer. Pyridoxal 5'-phosphate serves as cofactor.

Its subcellular location is the cytoplasm. It carries out the reaction (6R)-5,10-methylene-5,6,7,8-tetrahydrofolate + glycine + H2O = (6S)-5,6,7,8-tetrahydrofolate + L-serine. The protein operates within one-carbon metabolism; tetrahydrofolate interconversion. It functions in the pathway amino-acid biosynthesis; glycine biosynthesis; glycine from L-serine: step 1/1. Catalyzes the reversible interconversion of serine and glycine with tetrahydrofolate (THF) serving as the one-carbon carrier. This reaction serves as the major source of one-carbon groups required for the biosynthesis of purines, thymidylate, methionine, and other important biomolecules. Also exhibits THF-independent aldolase activity toward beta-hydroxyamino acids, producing glycine and aldehydes, via a retro-aldol mechanism. This is Serine hydroxymethyltransferase from Pelotomaculum thermopropionicum (strain DSM 13744 / JCM 10971 / SI).